Reading from the N-terminus, the 684-residue chain is Suppressor of presenilin protein 3 (684 aa).

C2H2-type zinc fingers lie at residues 21–43, 48–71, 123–145, 261–283, and 291–313; these read YKCHLCGQCFYRGCGLASHLRRH, FDCEHCAYTCKHKYAYDRHLLQSH, YKCPLCISTFGSHARAVYHILSH, YLCRNCPYVSWNVSSLWRHFRHH, and WTCIACSYSSSSRVKIDLHVKMH. 3 disordered regions span residues 337 to 359, 419 to 440, and 469 to 501; these read DLNKPTNKKKKPDGGNGSNHSDM, KNNSNPTVLPNKRNSIKTSKSD, and TSKFYRPESPDSLASNNSAHGDEIESTSSDQFQ. 2 consecutive C2H2-type zinc fingers follow at residues 590–612 and 618–641; these read RECTDCPFKHNDLQQFRLHRDKH and HTCPECNYSSNNHNQVVEHTFVDH. Positions 652 to 684 are disordered; it reads LPSSDSEDDNIPVPPDTPQRKKKAPKRGKRRGW. The segment covering 671–684 has biased composition (basic residues); it reads RKKKAPKRGKRRGW.

The protein localises to the nucleus. Its function is as follows. Probable transcriptional regulator, which participates in the transcriptional repression of the presenilin protein hop-1. This chain is Suppressor of presenilin protein 3 (spr-3), found in Caenorhabditis elegans.